A 251-amino-acid chain; its full sequence is Ubiquinone/menaquinone biosynthesis C-methyltransferase UbiE (251 aa).

Residues Thr-74, Asp-95, and 123–124 (NA) each bind S-adenosyl-L-methionine.

The protein belongs to the class I-like SAM-binding methyltransferase superfamily. MenG/UbiE family.

The catalysed reaction is a 2-demethylmenaquinol + S-adenosyl-L-methionine = a menaquinol + S-adenosyl-L-homocysteine + H(+). It catalyses the reaction a 2-methoxy-6-(all-trans-polyprenyl)benzene-1,4-diol + S-adenosyl-L-methionine = a 5-methoxy-2-methyl-3-(all-trans-polyprenyl)benzene-1,4-diol + S-adenosyl-L-homocysteine + H(+). It participates in quinol/quinone metabolism; menaquinone biosynthesis; menaquinol from 1,4-dihydroxy-2-naphthoate: step 2/2. Its pathway is cofactor biosynthesis; ubiquinone biosynthesis. Its function is as follows. Methyltransferase required for the conversion of demethylmenaquinol (DMKH2) to menaquinol (MKH2) and the conversion of 2-polyprenyl-6-methoxy-1,4-benzoquinol (DDMQH2) to 2-polyprenyl-3-methyl-6-methoxy-1,4-benzoquinol (DMQH2). The polypeptide is Ubiquinone/menaquinone biosynthesis C-methyltransferase UbiE (Marinomonas sp. (strain MWYL1)).